A 302-amino-acid chain; its full sequence is Probable lipid kinase YegS-like (302 aa).

The region spanning Met1–Leu129 is the DAGKc domain. ATP contacts are provided by residues Thr39, Gly65–Glu71, and Thr92. Residues Arg210, Asp213, and Leu215 each contribute to the Mg(2+) site. Glu268 (proton acceptor) is an active-site residue.

This sequence belongs to the diacylglycerol/lipid kinase family. YegS lipid kinase subfamily. Mg(2+) serves as cofactor. It depends on Ca(2+) as a cofactor.

It localises to the cytoplasm. In terms of biological role, probably phosphorylates lipids; the in vivo substrate is unknown. The protein is Probable lipid kinase YegS-like of Pseudomonas aeruginosa (strain UCBPP-PA14).